The chain runs to 4655 residues: Low-density lipoprotein receptor-related protein 2 (4655 aa).

The N-terminal stretch at 1–25 (MDRGPAAVACTLLLALVACLAPASG) is a signal peptide. Over 26 to 4423 (QECDSAHFRC…FSKGISPGTT (4398 aa)) the chain is Extracellular. LDL-receptor class A domains lie at 27–63 (ECDS…IGCA), 66–104 (TCQQ…QDCS), 107–143 (TCSS…NDCQ), 146–180 (TCEQ…INCT), 182–218 (ICLH…HACN), 221–257 (TCGG…DGCE), and 265–308 (KCSP…KYCS). 21 cysteine pairs are disulfide-bonded: C28/C40, C35/C53, C47/C62, C67/C80, C74/C93, C87/C103, C108/C120, C115/C133, C127/C142, C147/C157, C152/C170, C164/C179, C183/C195, C190/C208, C202/C217, C222/C234, C229/C247, C241/C256, C266/C279, C273/C292, and C286/C307. Residues N159 and N178 are each glycosylated (N-linked (GlcNAc...) asparagine). N-linked (GlcNAc...) asparagine glycans are attached at residues N299, N300, N341, N388, and N463. LDL-receptor class B repeat units follow at residues 436 to 478 (QRVF…DWVN), 479 to 521 (NKIY…DPTV), 522 to 568 (GYLF…DMIS), 569 to 613 (KRVY…FEGQ), 753 to 795 (STIF…DWIS), 796 to 837 (KNLY…HPFA), 838 to 881 (GYLF…DWAA), and 882 to 925 (SRLY…FGEH). N866 carries N-linked (GlcNAc...) asparagine glycosylation. An LDL-receptor class A 8 domain is found at 1025–1061 (QCGLFSFPCKNGRCVPNYYLCDGVDDCHDNSDEQLCG). 3 cysteine pairs are disulfide-bonded: C1026–C1038, C1033–C1051, and C1045–C1060. N1064 carries N-linked (GlcNAc...) asparagine glycosylation. LDL-receptor class A domains lie at 1066–1102 (TCSS…HNCP), 1108–1144 (SCLD…KNCN), 1148–1184 (TCQP…VGCV), 1186–1223 (NCTA…AGCP), 1229–1267 (MCHS…NACV), 1270–1306 (TCPS…KDCP), and 1304–1349 (DCPT…PLCN). 6 cysteine pairs are disulfide-bonded: C1067–C1079, C1074–C1092, C1086–C1101, C1109–C1121, C1116–C1134, and C1128–C1143. Ca(2+) contacts are provided by W1126, D1129, D1131, D1133, D1139, and E1140. N1144 carries N-linked (GlcNAc...) asparagine glycosylation. Disulfide bonds link C1149–C1161, C1156–C1174, and C1168–C1183. N1186 carries N-linked (GlcNAc...) asparagine glycosylation. Disulfide bonds link C1187–C1200, C1194–C1213, C1207–C1222, C1230–C1243, C1237–C1256, C1250–C1266, C1271–C1283, C1278–C1296, C1290–C1305, C1305–C1325, C1312–C1338, and C1332–C1348. Positions 1208, 1210, 1212, 1218, and 1219 each coordinate Ca(2+). N-linked (GlcNAc...) asparagine glycans are attached at residues N1327, N1340, and N1383. Residues 1390 to 1429 (DIDECDILGSCSQHCYNMRGSFRCSCDTGYMLESDGRTCK) enclose the EGF-like 1; calcium-binding domain. 3 cysteine pairs are disulfide-bonded: C1394/C1404, C1400/C1413, and C1415/C1428. N-linked (GlcNAc...) asparagine glycosylation is found at N1464, N1496, and N1550. LDL-receptor class B repeat units follow at residues 1478-1520 (GRIF…DWVG), 1521-1563 (RNLY…DPRM), 1566-1609 (HLLF…DYPN), 1610-1654 (RLLY…FEDS), and 1655-1695 (VYWT…VHPS). N1675 carries N-linked (GlcNAc...) asparagine glycosylation. Residues 1700 to 1741 (SVNPCAFSRCSHLCLLSSQGPHFYSCVCPSGWSLSPDLLNCL) form the EGF-like 2 domain. 3 cysteine pairs are disulfide-bonded: C1704–C1713, C1709–C1725, and C1727–C1740. 5 LDL-receptor class B repeats span residues 1790–1832 (QYIY…DWIS), 1833–1882 (RNLY…DPAR), 1883–1930 (GKLY…DIEE), 1931–1972 (QKLY…HDSF), and 1973–2013 (LYYT…YHRR). N1810 carries N-linked (GlcNAc...) asparagine glycosylation. N2055 carries an N-linked (GlcNAc...) asparagine glycan. LDL-receptor class B repeat units lie at residues 2107-2156 (GFIY…DWVA), 2157-2201 (GNLY…DPKN), 2202-2245 (RYLF…DRSD), 2246-2289 (GYVY…FENS), 2431-2477 (DRIY…DWIT), 2478-2518 (RRIY…DPCQ), 2519-2562 (GYLY…DYEE), 2563-2604 (DLLY…YGQY), and 2605-2646 (IYWT…VVKN). 2 N-linked (GlcNAc...) asparagine glycosylation sites follow: N2177 and N2224. N2499 and N2547 each carry an N-linked (GlcNAc...) asparagine glycan. 10 consecutive LDL-receptor class A domains span residues 2699–2737 (RCGA…SVCA), 2740–2776 (TCSP…AGCL), 2779–2818 (DCNA…KNCP), 2821–2860 (TCQS…TYCT), 2863–2900 (TCSS…ASCG), 2905–2944 (TCLA…HQCQ), 2947–2989 (NCSD…QNCT), 2992–3028 (TCSE…RGCL), 3031–3069 (TCQQ…HLCH), and 3074–3110 (TCPP…KGCG). 18 cysteine pairs are disulfide-bonded: C2700-C2712, C2707-C2725, C2719-C2736, C2741-C2753, C2748-C2766, C2760-C2775, C2780-C2793, C2788-C2806, C2800-C2817, C2822-C2835, C2829-C2848, C2842-C2859, C2864-C2876, C2871-C2889, C2883-C2899, C2906-C2918, C2913-C2931, and C2925-C2943. The N-linked (GlcNAc...) asparagine glycan is linked to N2781. N-linked (GlcNAc...) asparagine glycosylation is found at N2809 and N2810. Residue N2947 is glycosylated (N-linked (GlcNAc...) asparagine). Intrachain disulfides connect C2948-C2965, C2955-C2978, C2972-C2988, C2993-C3005, C3000-C3018, C3012-C3027, C3032-C3044, C3039-C3057, C3051-C3068, C3075-C3087, C3082-C3100, C3094-C3109, C3114-C3126, C3122-C3135, C3137-C3150, C3156-C3167, C3163-C3176, and C3178-C3191. Residue N2987 is glycosylated (N-linked (GlcNAc...) asparagine). Residues 3110 to 3151 (GINECHDPSISGCDHNCTDTLTSFYCSCRPGYKLMSDKRTCV) form the EGF-like 3 domain. An N-linked (GlcNAc...) asparagine glycan is attached at N3125. Residues 3152 to 3192 (DIDECTEMPFVCSQKCENVIGSYICKCAPGYLREPDGKTCR) form the EGF-like 4; calcium-binding domain. N-linked (GlcNAc...) asparagine glycans are attached at residues N3211, N3257, N3315, and N3355. LDL-receptor class B repeat units follow at residues 3239-3281 (KRLY…DWVS), 3282-3324 (RKLY…DNPR), 3333-3376 (GYLY…DYTN), 3377-3419 (DLLY…FEDT), and 3420-3460 (IYWT…YHPY). An N-linked (GlcNAc...) asparagine glycan is attached at N3446. 11 consecutive LDL-receptor class A domains span residues 3511–3549 (MCSS…ALCP), 3552–3590 (FCRL…LLCE), 3593–3631 (HCDS…SHCA), 3634–3672 (TCRP…EECM), 3677–3715 (LCDN…QGCE), 3718–3755 (TCHP…ENCA), 3758–3794 (ECTE…RDCE), 3797–3833 (TCHP…ADCP), 3841–3879 (YCQA…HLCL), 3882–3921 (PCNS…EHCR), and 3927–3963 (PCTE…LGCN). Cystine bridges form between C3512–C3525, C3519–C3538, C3532–C3548, C3553–C3565, C3560–C3578, C3572–C3589, C3594–C3606, C3601–C3619, C3613–C3630, C3635–C3647, C3642–C3660, C3654–C3671, C3678–C3692, C3686–C3705, C3699–C3714, C3719–C3732, C3727–C3745, C3739–C3754, C3759–C3771, C3766–C3784, C3778–C3793, C3798–C3810, C3805–C3823, C3817–C3832, C3842–C3854, C3849–C3867, C3861–C3878, C3883–C3896, C3891–C3909, C3903–C3920, C3928–C3940, C3935–C3953, and C3947–C3962. A glycan (N-linked (GlcNAc...) asparagine) is linked at N3564. N-linked (GlcNAc...) asparagine glycosylation occurs at N3680. The N-linked (GlcNAc...) asparagine glycan is linked to N3978. The EGF-like 5; calcium-binding domain maps to 4007–4048 (DINECEQFGTCPQHCRNTKGSYECVCADGFTSMSDRPGKRCA). Intrachain disulfides connect C4011-C4021, C4017-C4030, and C4032-C4047. N-linked (GlcNAc...) asparagine glycosylation is present at N4068. 3 LDL-receptor class B repeats span residues 4154 to 4196 (RHIY…NPKL), 4197 to 4240 (GLMF…DYLN), and 4242 to 4283 (DRIY…FEDQ). N-linked (GlcNAc...) asparagine glycosylation is present at N4327. An EGF-like 6 domain is found at 4377-4411 (LPPPCRCMHGGNCYFDETDLPKCKCPSGYTGKYCE). 3 disulfide bridges follow: C4381–C4389, C4383–C4399, and C4401–C4410. The helical transmembrane segment at 4424 to 4446 (AVAVLLTILLIVVIGALAIAGFF) threads the bilayer. Residues 4447-4655 (HYRRTGSLLP…ANLVKEDSEV (209 aa)) lie on the Cytoplasmic side of the membrane. The short motif at 4453-4462 (SLLPALPKLP) is the SH3-binding element. Residues 4456 to 4461 (PALPKL) carry the PxLPxI/L motif 1; mediates interaction with ANKRA2 motif. Positions 4459–4464 (PKLPSL) match the PxLPxI/L motif 2; mediates interaction with ANKRA2 motif. 2 positions are modified to phosphoserine: S4463 and S4466. The Endocytosis signal motif lies at 4521 to 4526 (FENPMY). The tract at residues 4550 to 4574 (KNYGSPINPSEIVPETNPTSPAADG) is disordered. Residues 4565–4574 (TNPTSPAADG) show a composition bias toward polar residues. S4569 bears the Phosphoserine mark. Residues 4589-4602 (QTTNFENPIYAQME) are interaction with DAB2. The NPXY motif motif lies at 4595–4598 (NPIY). The SH2-binding signature appears at 4598–4601 (YAQM). Residues 4601–4655 (MENEQKESVAATPPPSPSLPAKPKPPSRRDPTPTYSATEDTFKDTANLVKEDSEV) are disordered. An SH3-binding motif is present at residues 4611–4622 (ATPPPSPSLPAK). Residues 4612 to 4624 (TPPPSPSLPAKPK) show a composition bias toward pro residues. The residue at position 4616 (S4616) is a Phosphoserine. Position 4632 is a phosphothreonine (T4632). The residue at position 4653 (S4653) is a Phosphoserine.

Belongs to the LDLR family. Binds plasminogen, extracellular matrix components, plasminogen activator-plasminogen activator inhibitor type I complex, apolipoprotein E-enriched beta-VLDL, lipoprotein lipase, lactoferrin, CLU/clusterin and calcium. Forms a multimeric complex together with LRPAP1. Interacts (via PxLPxI/L motif) with ANKRA2 (via ankyrin repeats). Interacts with LRP2BP. Interacts (via NPXY motif) with DAB2; the interaction is not affected by tyrosine phosphorylation of the NPXY motif. Interacts with MB. Interacts with BMP4. Interacts with the Sonic hedgehog protein N-product which is the active product of SHH. Interacts with CST3 in a calcium-dependent manner. Interacts with the vitamin-D binding protein GC/DBP. Interacts with sex hormone-binding protein SHBG. Interacts with angiotensin-2. Also interacts with angiotensin 1-7. Interacts with APOM. Interacts with selenoprotein SEPP1. Interacts with LEP. Interacts with ALB. Interacts with the antiapoptotic protein BIRC5/survivin. Interacts with matrix metalloproteinase MMP2 in complex with metalloproteinase inhibitor TIMP1. In neurons, forms a trimeric complex with APP and APPB1/FE65. Interacts with LDLRAP1/ARH; mediates trafficking of LRP2 to the endocytic recycling compartment. Does not interact with beta-amyloid protein 40 alone but interacts with the complex composed of beta-amyloid protein 40 and CLU/APOJ. Interacts with MDK. Post-translationally, a fraction undergoes proteolytic cleavage of the extracellular domain at the cell membrane to generate a cytoplasmic tail fragment. This is internalized into the early endosome from where it trafficks in an LDLRAP1/ARH-dependent manner to the endocytic recycling compartment (ERC). In the ERC, it is further cleaved by gamma-secretase to release a fragment which translocates to the nucleus and mediates transcriptional repression. In terms of processing, N-glycosylation is required for ligand binding. Expressed in first and third trimester cytotrophoblasts in the placenta (at protein level). Absorptive epithelia, including renal proximal tubules.

Its subcellular location is the apical cell membrane. It localises to the endosome lumen. It is found in the membrane. The protein localises to the coated pit. The protein resides in the cell projection. Its subcellular location is the dendrite. It localises to the axon. In terms of biological role, multiligand endocytic receptor. Acts together with CUBN to mediate endocytosis of high-density lipoproteins. Mediates receptor-mediated uptake of polybasic drugs such as aprotinin, aminoglycosides and polymyxin B. In the kidney, mediates the tubular uptake and clearance of leptin. Also mediates transport of leptin across the blood-brain barrier through endocytosis at the choroid plexus epithelium. Endocytosis of leptin in neuronal cells is required for hypothalamic leptin signaling and leptin-mediated regulation of feeding and body weight. Mediates endocytosis and subsequent lysosomal degradation of CST3 in kidney proximal tubule cells. Mediates renal uptake of 25-hydroxyvitamin D3 in complex with the vitamin D3 transporter GC/DBP. Mediates renal uptake of metallothionein-bound heavy metals. Together with CUBN, mediates renal reabsorption of myoglobin. Mediates renal uptake and subsequent lysosomal degradation of APOM. Plays a role in kidney selenium homeostasis by mediating renal endocytosis of selenoprotein SEPP1. Mediates renal uptake of the antiapoptotic protein BIRC5/survivin which may be important for functional integrity of the kidney. Mediates renal uptake of matrix metalloproteinase MMP2 in complex with metalloproteinase inhibitor TIMP1. Mediates endocytosis of Sonic hedgehog protein N-product (ShhN), the active product of SHH. Also mediates ShhN transcytosis. In the embryonic neuroepithelium, mediates endocytic uptake and degradation of BMP4, is required for correct SHH localization in the ventral neural tube and plays a role in patterning of the ventral telencephalon. Required at the onset of neurulation to sequester SHH on the apical surface of neuroepithelial cells of the rostral diencephalon ventral midline and to control PTCH1-dependent uptake and intracellular trafficking of SHH. During neurulation, required in neuroepithelial cells for uptake of folate bound to the folate receptor FOLR1 which is necessary for neural tube closure. In the adult brain, negatively regulates BMP signaling in the subependymal zone which enables neurogenesis to proceed. In astrocytes, mediates endocytosis of ALB which is required for the synthesis of the neurotrophic factor oleic acid. Involved in neurite branching. During optic nerve development, required for SHH-mediated migration and proliferation of oligodendrocyte precursor cells. Mediates endocytic uptake and clearance of SHH in the retinal margin which protects retinal progenitor cells from mitogenic stimuli and keeps them quiescent. Plays a role in reproductive organ development by mediating uptake in reproductive tissues of androgen and estrogen bound to the sex hormone binding protein SHBG. Mediates endocytosis of angiotensin-2. Also mediates endocytosis of angiotensis 1-7. Binds to the complex composed of beta-amyloid protein 40 and CLU/APOJ and mediates its endocytosis and lysosomal degradation. Required for embryonic heart development. Required for normal hearing, possibly through interaction with estrogen in the inner ear. The protein is Low-density lipoprotein receptor-related protein 2 of Homo sapiens (Human).